The following is a 183-amino-acid chain: Apo-citrate lyase phosphoribosyl-dephospho-CoA transferase (183 aa).

The protein belongs to the CitX family.

It catalyses the reaction apo-[citrate lyase ACP] + 2'-(5''-triphospho-alpha-D-ribosyl)-3'-dephospho-CoA = holo-[citrate lyase ACP] + diphosphate. Functionally, transfers 2-(5''-triphosphoribosyl)-3'-dephosphocoenzyme-A on a serine residue to the apo-acyl carrier protein (gamma chain) of the citrate lyase to yield holo-acyl carrier protein. This is Apo-citrate lyase phosphoribosyl-dephospho-CoA transferase from Citrobacter koseri (strain ATCC BAA-895 / CDC 4225-83 / SGSC4696).